A 220-amino-acid chain; its full sequence is Fructose-6-phosphate aldolase 1 (220 aa).

Lys85 serves as the catalytic Schiff-base intermediate with substrate.

It belongs to the transaldolase family. Type 3A subfamily. In terms of assembly, homodecamer.

The protein resides in the cytoplasm. The catalysed reaction is beta-D-fructose 6-phosphate = dihydroxyacetone + D-glyceraldehyde 3-phosphate. In terms of biological role, catalyzes the reversible formation of fructose 6-phosphate from dihydroxyacetone and D-glyceraldehyde 3-phosphate via an aldolization reaction. This Escherichia coli O6:H1 (strain CFT073 / ATCC 700928 / UPEC) protein is Fructose-6-phosphate aldolase 1 (fsaA).